Reading from the N-terminus, the 419-residue chain is Fusaric acid cluster transcription factor FUB10 (419 aa).

The zn(2)-C6 fungal-type DNA-binding region spans 16–47; the sequence is CDRCRAQKLRCHRDSGHSTDACLRCLKSGIEC. A disordered region spans residues 50-92; it reads SKARPTGRPPSRQVQPTVVVEQGDTSSSSHTTDSSPSAGGTDM. Low complexity predominate over residues 74-86; sequence TSSSSHTTDSSPS.

It localises to the nucleus. Transcription factor that regulates the expression of the gene cluster that mediates the biosynthesis of fusaric acid, a mycotoxin with low to moderate toxicity to animals and humans, but with high phytotoxic properties. This chain is Fusaric acid cluster transcription factor FUB10, found in Gibberella fujikuroi (strain CBS 195.34 / IMI 58289 / NRRL A-6831) (Bakanae and foot rot disease fungus).